A 1040-amino-acid polypeptide reads, in one-letter code: Multidrug resistance protein MdtB (1040 aa).

A run of 12 helical transmembrane segments spans residues 16–36 (FIMRPVATTLLMVAILLAGII), 347–367 (LMMAIALVVMIIYLFLRNIPA), 369–389 (IIPGVAVPLSLIGTFAVMVFL), 396–416 (LTLMALTIATGFVVDDAIVVI), 440–460 (IGFTIISLTFSLIAVLIPLLF), 472–492 (FAITLAVAILISAVVSLTLTP), 537–557 (WLTLSVALSTLLLSVLLWVFI), 863–883 (LGSTVWLIVAAVVAMYIVLGI), 888–908 (FIHPITILSTLPTAGVGALLA), 911–931 (IAGSELDVIAIIGIILLIGIV), 968–988 (ILMTTLAALLGALPLMLSTGV), and 998–1018 (IGMVGGLIVSQVLTLFTTPVI).

Belongs to the resistance-nodulation-cell division (RND) (TC 2.A.6) family. MdtB subfamily. As to quaternary structure, part of a tripartite efflux system composed of MdtA, MdtB and MdtC. MdtB forms a heteromultimer with MdtC.

The protein localises to the cell inner membrane. The MdtABC tripartite complex confers resistance against novobiocin and deoxycholate. This chain is Multidrug resistance protein MdtB, found in Escherichia coli O45:K1 (strain S88 / ExPEC).